Here is a 97-residue protein sequence, read N- to C-terminus: MTNSHGEKRCTRYKLQKTVRERGISPVSKAIQEFEEGQMVHIDIDPSIQKGMPNPKFQGSTGKIVGQRGRSYILEVRSGNAMKEVISLPQHLKPQKY.

Belongs to the eukaryotic ribosomal protein eL21 family.

This Methanosarcina barkeri (strain Fusaro / DSM 804) protein is Large ribosomal subunit protein eL21.